Here is a 315-residue protein sequence, read N- to C-terminus: N-acetylneuraminate lyase (315 aa).

Residues Ser-59 and Ser-60 each contribute to the aceneuramate site. Catalysis depends on Tyr-149, which acts as the Proton donor. Residue Lys-177 is the Schiff-base intermediate with substrate of the active site. The aceneuramate site is built by Ser-179, Gly-202, Asp-204, Glu-205, and Gly-221.

The protein belongs to the DapA family. NanA subfamily. In terms of assembly, homotetramer.

Its subcellular location is the cytoplasm. The enzyme catalyses aceneuramate = aldehydo-N-acetyl-D-mannosamine + pyruvate. The protein operates within amino-sugar metabolism; N-acetylneuraminate degradation; D-fructose 6-phosphate from N-acetylneuraminate: step 1/5. Its function is as follows. Catalyzes the reversible aldol cleavage of N-acetylneuraminic acid (sialic acid; Neu5Ac) to form pyruvate and N-acetylmannosamine (ManNAc) via a Schiff base intermediate. Cannot use 2,7-anhydro-Neu5Ac. Involved in the degradation of sialic acid, which is present in the host mucus layer and represents a much-coveted source of nutrients for R.gnavus, a prevalent member of the normal gut microbiota. In Mediterraneibacter gnavus (strain ATCC 29149 / DSM 114966 / JCM 6515 / VPI C7-9) (Ruminococcus gnavus), this protein is N-acetylneuraminate lyase.